A 155-amino-acid polypeptide reads, in one-letter code: RxLR effector protein 24 (155 aa).

The first 21 residues, 1–21 (MRLLIWVLFVTLVTFVSNTTA), serve as a signal peptide directing secretion. The RxLR-dEER motif lies at 52–78 (RFLRTESKNDLKSDADTNGIDIEDEER). The tract at residues 105–155 (EKAFQRMNQKGETPTTLAKRLDIGKTAEKRFEKTYEKYTAWWINHHTNAGT) is RABA-binding domain.

Belongs to the RxLR effector family. As to quaternary structure, interacts with Arabidopsis thaliana RABA GTPases including RABA1a, RABA1b, RABA1c, RABA1d, RABA1f, RABA2a, RABA2c, RABA2d, RABA4a, RABA4b and RABA4c.

It localises to the secreted. Its subcellular location is the host cell membrane. The protein resides in the host endomembrane system. In terms of biological role, effector protein that contributes to pathogen virulence. Targets members of the RABA GTPases subfamily to inhibit vesicular secretion, leading to an accumulation of secretory proteins in the endoplasmic reticulum. This is RxLR effector protein 24 from Phytophthora brassicae.